The primary structure comprises 669 residues: UvrABC system protein B (669 aa).

The Helicase ATP-binding domain maps to 26–414; that stretch reads TNFHAGIAKQ…AGEVIELLVR (389 aa). 39–46 contributes to the ATP binding site; that stretch reads GVTGSGKT. The short motif at 92 to 115 is the Beta-hairpin element; that stretch reads YYDYYQPEAYVPASDTFIEKDSSI. A Helicase C-terminal domain is found at 435–597; the sequence is LISQINVCIK…SVVRPISDIL (163 aa). Positions 631–666 constitute a UVR domain; sequence AAQMKVLEQQMYQHARDLEFEDAARIRDQIQRLREA.

It belongs to the UvrB family. As to quaternary structure, forms a heterotetramer with UvrA during the search for lesions. Interacts with UvrC in an incision complex.

The protein localises to the cytoplasm. Its function is as follows. The UvrABC repair system catalyzes the recognition and processing of DNA lesions. A damage recognition complex composed of 2 UvrA and 2 UvrB subunits scans DNA for abnormalities. Upon binding of the UvrA(2)B(2) complex to a putative damaged site, the DNA wraps around one UvrB monomer. DNA wrap is dependent on ATP binding by UvrB and probably causes local melting of the DNA helix, facilitating insertion of UvrB beta-hairpin between the DNA strands. Then UvrB probes one DNA strand for the presence of a lesion. If a lesion is found the UvrA subunits dissociate and the UvrB-DNA preincision complex is formed. This complex is subsequently bound by UvrC and the second UvrB is released. If no lesion is found, the DNA wraps around the other UvrB subunit that will check the other stand for damage. The chain is UvrABC system protein B from Xylella fastidiosa (strain 9a5c).